We begin with the raw amino-acid sequence, 232 residues long: Protein lin-7 homolog A (232 aa).

The Kinase interacting site signature appears at 14 to 28; sequence MATLTVVQPLTLDRD. In terms of domain architecture, L27 spans 25 to 80; the sequence is LDRDVARAIELLEKLQESGEVPVHKLQSLKKVLQSEFCTAIREVYQYMHETITVNG. Residues 108-190 form the PDZ domain; it reads VVELPKTDEG…SVKLVVRYTP (83 aa).

It belongs to the lin-7 family. Forms a complex with CASK and CASKIN1. Component of the brain-specific heterotrimeric complex (LIN-10-LIN-2-LIN-7 complex) composed of at least APBA1, CASK, and LIN7, which associates with the motor protein KIF17 to transport vesicles along microtubules. Can also interact with other modular proteins containing protein-protein interaction domains like PALS1, PALS2, MPP7, DLG1, DLG2 and DLG3 through its L27 domain. Interacts with DLG4 and GRIN2B as well as CDH1 and CTNNB1, the channels KCNJ12/Kir2.2, KCNJ4/Kir2.3 and probably KCNJ2/Kir2.1 and SLC6A12/BGT-1 via its PDZ domain. The association of LIN7A with cadherin and beta-catenin is calcium-dependent, occurs at synaptic junctions and requires the actin cytoskeleton. Interacts with EGFR, ERBB2, ERBB3 and ERBB4 with both PDZ and KID domains. Associates with KIF17 via APBA1. Interacts with HTR4. Forms a tripartite complex composed of DLG1, MPP7 and LIN7 (LIN7A or LIN7C). Interacts with MARCHF11. As to expression, ubiquitously expressed in brain and detected in lung, liver and testis (at protein level). Expression was detected only in brain.

Its subcellular location is the cell membrane. It is found in the basolateral cell membrane. The protein localises to the cell junction. It localises to the postsynaptic density membrane. The protein resides in the tight junction. Its function is as follows. Plays a role in establishing and maintaining the asymmetric distribution of channels and receptors at the plasma membrane of polarized cells. Forms membrane-associated multiprotein complexes that may regulate delivery and recycling of proteins to the correct membrane domains. The tripartite complex composed of LIN7 (LIN7A, LIN7B or LIN7C), CASK and APBA1 associates with the motor protein KIF17 to transport vesicles containing N-methyl-D-aspartate (NMDA) receptor subunit NR2B along microtubules. This complex may have the potential to couple synaptic vesicle exocytosis to cell adhesion in brain. Ensures the proper localization of GRIN2B (subunit 2B of the NMDA receptor) to neuronal postsynaptic density and may function in localizing synaptic vesicles at synapses where it is recruited by beta-catenin and cadherin. Required to localize Kir2 channels, GABA transporter (SLC6A12) and EGFR/ERBB1, ERBB2, ERBB3 and ERBB4 to the basolateral membrane of epithelial cells. In Rattus norvegicus (Rat), this protein is Protein lin-7 homolog A (Lin7a).